The primary structure comprises 126 residues: Large ribosomal subunit protein bL17 (126 aa).

This sequence belongs to the bacterial ribosomal protein bL17 family. As to quaternary structure, part of the 50S ribosomal subunit. Contacts protein L32.

The protein is Large ribosomal subunit protein bL17 of Magnetococcus marinus (strain ATCC BAA-1437 / JCM 17883 / MC-1).